The following is a 1755-amino-acid chain: Transposon Ty1-JR2 Gag-Pol polyprotein (1755 aa).

Positions 1–16 (MESQQLSQHSHISHGS) are enriched in low complexity. Disordered regions lie at residues 1-93 (MESQ…MMTQ), 126-173 (PQSQ…RPPP), and 352-421 (GSRN…SKST). 3 stretches are compositionally biased toward polar residues: residues 48–60 (TKANSQQTTTPAS), 71–93 (SPQTAQSHSPQNGPYPQQCMMTQ), and 127–152 (QSQFPQYPSSVGTPLSTPSPESGNTF). Positions 153–165 (TDSSSADSDMTST) are enriched in low complexity. Residues 299–401 (NNGIHINNKV…NSKSKTARAH (103 aa)) are RNA-binding. Low complexity predominate over residues 402–418 (NVSTSNNSPSTDNDSIS). Serine 416 is modified (phosphoserine). Aspartate 461 serves as the catalytic For protease activity; shared with dimeric partner. The tract at residues 583–640 (NVHTSESTRKYPYPFIHRMLAHANAQTIRYSLKNNTITYFNESDVDWSSAIDYQCPDC) is integrase-type zinc finger-like. Positions 660-835 (NSYEPFQYLH…AGLDISTLLP (176 aa)) constitute an Integrase catalytic domain. Mg(2+) contacts are provided by aspartate 671 and aspartate 736. Disordered stretches follow at residues 956–1087 (SKAV…ETEK), 1092–1111 (RSPSIDASPPENNSSHNIVP), and 1130–1186 (DLPL…EDNE). Low complexity predominate over residues 960 to 969 (SPTDSTPPST). The segment covering 1005–1015 (STPQISNIEST) has biased composition (polar residues). Over residues 1038–1053 (ESSHASKSKDFRHSDS) the composition is skewed to basic and acidic residues. 2 stretches are compositionally biased toward polar residues: residues 1054-1082 (YSENETNHTNVPISSTGGTNNKTVPQISD) and 1101-1111 (PENNSSHNIVP). Residues 1178 to 1212 (KKRSLEDNETEIKVSRDTWNTKNMRSLEPPRSKKR) carry the Bipartite nuclear localization signal motif. The Reverse transcriptase Ty1/copia-type domain occupies 1338–1476 (NNYYITQLDI…DILGLEIKYQ (139 aa)). The Mg(2+) site is built by aspartate 1346, aspartate 1427, aspartate 1428, aspartate 1610, glutamate 1652, and aspartate 1685. The RNase H Ty1/copia-type domain maps to 1610 to 1752 (DASYGNQPYY…IKTFKLLTNK (143 aa)).

As to quaternary structure, the capsid protein forms a homotrimer, from which the VLPs are assembled. The protease is a homodimer, whose active site consists of two apposed aspartic acid residues. Post-translationally, initially, virus-like particles (VLPs) are composed of the structural unprocessed proteins Gag and Gag-Pol, and also contain the host initiator methionine tRNA (tRNA(i)-Met) which serves as a primer for minus-strand DNA synthesis, and a dimer of genomic Ty RNA. Processing of the polyproteins occurs within the particle and proceeds by an ordered pathway, called maturation. First, the protease (PR) is released by autocatalytic cleavage of the Gag-Pol polyprotein yielding capsid protein p45 and a Pol-p154 precursor protein. This cleavage is a prerequisite for subsequent processing of Pol-p154 at the remaining sites to release the mature structural and catalytic proteins. Maturation takes place prior to the RT reaction and is required to produce transposition-competent VLPs.

It is found in the cytoplasm. Its subcellular location is the nucleus. It carries out the reaction DNA(n) + a 2'-deoxyribonucleoside 5'-triphosphate = DNA(n+1) + diphosphate. It catalyses the reaction Endonucleolytic cleavage to 5'-phosphomonoester.. Capsid protein (CA) is the structural component of the virus-like particle (VLP), forming the shell that encapsulates the retrotransposons dimeric RNA genome. The particles are assembled from trimer-clustered units and there are holes in the capsid shells that allow for the diffusion of macromolecules. CA also has nucleocapsid-like chaperone activity, promoting primer tRNA(i)-Met annealing to the multipartite primer-binding site (PBS), dimerization of Ty1 RNA and initiation of reverse transcription. In terms of biological role, the aspartyl protease (PR) mediates the proteolytic cleavages of the Gag and Gag-Pol polyproteins after assembly of the VLP. Its function is as follows. Reverse transcriptase/ribonuclease H (RT) is a multifunctional enzyme that catalyzes the conversion of the retro-elements RNA genome into dsDNA within the VLP. The enzyme displays a DNA polymerase activity that can copy either DNA or RNA templates, and a ribonuclease H (RNase H) activity that cleaves the RNA strand of RNA-DNA heteroduplexes during plus-strand synthesis and hydrolyzes RNA primers. The conversion leads to a linear dsDNA copy of the retrotransposon that includes long terminal repeats (LTRs) at both ends. Functionally, integrase (IN) targets the VLP to the nucleus, where a subparticle preintegration complex (PIC) containing at least integrase and the newly synthesized dsDNA copy of the retrotransposon must transit the nuclear membrane. Once in the nucleus, integrase performs the integration of the dsDNA into the host genome. The protein is Transposon Ty1-JR2 Gag-Pol polyprotein (TY1B-JR2) of Saccharomyces cerevisiae (strain ATCC 204508 / S288c) (Baker's yeast).